The sequence spans 335 residues: Putative peroxisomal biogenesis factor 19 (335 aa).

2 disordered regions span residues 14 to 70 and 104 to 124; these read LETQ…LGND and YNKD…PSEE. Low complexity-rich tracts occupy residues 22–55 and 109–119; these read PTTT…PSTI and NNNSDDSNNGG.

It belongs to the peroxin-19 family.

It is found in the peroxisome. This is Putative peroxisomal biogenesis factor 19 (pex19) from Dictyostelium discoideum (Social amoeba).